The primary structure comprises 265 residues: Glycine/sarcosine N-methyltransferase (265 aa).

S-adenosyl-L-methionine contacts are provided by residues Tyr-28, Trp-36, Arg-45, Ala-69, Asp-90, 116–117, and Leu-134; that span reads DW. The substrate site is built by Asn-136, Arg-169, and Tyr-208.

The protein belongs to the class I-like SAM-binding methyltransferase superfamily. Glycine N-methyltransferase family. Monomer.

It catalyses the reaction glycine + 2 S-adenosyl-L-methionine = N,N-dimethylglycine + 2 S-adenosyl-L-homocysteine + 2 H(+). It carries out the reaction glycine + S-adenosyl-L-methionine = sarcosine + S-adenosyl-L-homocysteine + H(+). The enzyme catalyses sarcosine + S-adenosyl-L-methionine = N,N-dimethylglycine + S-adenosyl-L-homocysteine + H(+). It participates in amine and polyamine biosynthesis; betaine biosynthesis via glycine pathway; betaine from glycine: step 1/3. The protein operates within amine and polyamine biosynthesis; betaine biosynthesis via glycine pathway; betaine from glycine: step 2/3. Its activity is regulated as follows. Inhibited by acetate, dimethylglycine and S-adenosyl-L-homocysteine. Its function is as follows. Catalyzes the methylation of glycine and sarcosine to sarcosine and dimethylglycine, respectively, with S-adenosylmethionine (AdoMet) acting as the methyl donor. In Aphanothece halophytica, this protein is Glycine/sarcosine N-methyltransferase.